An 847-amino-acid polypeptide reads, in one-letter code: Receptor-like protein 12 (847 aa).

The first 27 residues, 1–27 (MMIRSHRHWVFSSRIIIFLSLLVHSLA), serve as a signal peptide directing secretion. Residues 28–798 (SSSPHFCRDD…LSEAEENMFN (771 aa)) are Extracellular-facing. Residues Asn-52, Asn-66, Asn-103, and Asn-132 are each glycosylated (N-linked (GlcNAc...) asparagine). LRR repeat units lie at residues 109 to 133 (LQYLRHLDLTNCNLYGEIPSSLGNL), 135 to 157 (HLTLVNLYFNKFVGEIPASIGNL), 158 to 181 (NQLRHLILANNVLTGEIPSSLGNL), 183 to 205 (RLVNLELFSNRLVGKIPDSIGDL), 206 to 229 (KQLRNLSLASNNLIGEIPSSLGNL), 231 to 253 (NLVHLVLTHNQLVGEVPASIGNL), 254 to 277 (IELRVMSFENNSLSGNIPISFANL), 279 to 301 (KLSIFVLSSNNFTSTFPFDMSIF), 302 to 325 (HNLEYFDVSYNSFSGPFPKSLLLI), 326 to 350 (PSLESIYLQENQFTGPIEFANTSSS), 351 to 374 (TKLQDLILGRNRLHGPIPESISRL), 375 to 398 (LNLEELDISHNNFTGAIPPTISKL), 400 to 422 (NLLHLDLSKNNLEGEVPACLWRL), 424 to 442 (TMVLSHNSFSSFENTSQEE), 443 to 466 (ALIEELDLNSNSFQGPIPYMICKL), 467 to 491 (SSLGFLDLSNNLFSGSIPSCIRNFS), 492 to 514 (GSIKELNLGDNNFSGTLPDIFSK), 516 to 539 (TELVSLDVSHNQLEGKFPKSLINC), 541 to 562 (ALELVNVESNKIKDIFPSWLES), 563 to 587 (LPSLHVLNLRSNKFYGPLYHRHASI), 589 to 613 (FQSLRIIDISHNNFSGTLPPYYFSN), 657 to 681 (RRDFRAIDFSGNKINGNIPESLGYL), 682 to 704 (KELRVLNLSGNAFTSVIPRFLAN), 705 to 729 (LTKLETLDISRNKLSGQIPQDLAAL), and 731 to 754 (FLSYMNFSHNLLQGPVPRGTQFQR). Asn-180 carries an N-linked (GlcNAc...) asparagine glycan. Residues Asn-210 and Asn-228 are each glycosylated (N-linked (GlcNAc...) asparagine). 3 N-linked (GlcNAc...) asparagine glycosylation sites follow: Asn-263, Asn-276, and Asn-289. Residue Asn-346 is glycosylated (N-linked (GlcNAc...) asparagine). A glycan (N-linked (GlcNAc...) asparagine) is linked at Asn-386. The N-linked (GlcNAc...) asparagine glycan is linked to Asn-437. 2 N-linked (GlcNAc...) asparagine glycosylation sites follow: Asn-489 and Asn-503. Asn-601 carries N-linked (GlcNAc...) asparagine glycosylation. Asn-688 and Asn-704 each carry an N-linked (GlcNAc...) asparagine glycan. The N-linked (GlcNAc...) asparagine glycan is linked to Asn-736. The chain crosses the membrane as a helical span at residues 799–819 (WVAAAIAYGPGVLCGLVIGHF). Residues 820-847 (YTSHNHEWFTEKFGRKQHKALTSVKCSL) are Cytoplasmic-facing.

Belongs to the RLP family.

The protein localises to the cell membrane. Involved in the perception of CLV3 and CLV3-like peptides, that act as extracellular signals regulating meristems maintenance. The polypeptide is Receptor-like protein 12 (Arabidopsis thaliana (Mouse-ear cress)).